We begin with the raw amino-acid sequence, 106 residues long: uncharacterized protein (106 aa).

The signal sequence occupies residues 1–27 (MHHFVPSISLFMASVSFSVFFSHLATS). Residues 42 to 62 (TLFSMVPLINSSFNLSVFLFF) traverse the membrane as a helical segment.

It is found in the membrane. This is an uncharacterized protein from Saccharomyces cerevisiae (strain ATCC 204508 / S288c) (Baker's yeast).